Reading from the N-terminus, the 231-residue chain is Large ribosomal subunit protein uL1 (231 aa).

The protein belongs to the universal ribosomal protein uL1 family. In terms of assembly, part of the 50S ribosomal subunit.

In terms of biological role, binds directly to 23S rRNA. The L1 stalk is quite mobile in the ribosome, and is involved in E site tRNA release. Functionally, protein L1 is also a translational repressor protein, it controls the translation of the L11 operon by binding to its mRNA. The chain is Large ribosomal subunit protein uL1 from Desulforudis audaxviator (strain MP104C).